A 439-amino-acid chain; its full sequence is Glutamine synthetase (439 aa).

The GS beta-grasp domain occupies 12–93; the sequence is RSPKFVQLIF…VYGYIYKDGK (82 aa). Positions 99–439 constitute a GS catalytic domain; the sequence is PRGVLKRVIE…EWELERYFFI (341 aa). Residues Glu-122 and Glu-124 each contribute to the Mg(2+) site. An ATP-binding site is contributed by Glu-172. Residues Glu-177 and Glu-184 each coordinate Mg(2+). Gly-229 is a binding site for L-glutamate. Mg(2+) is bound at residue His-233. Residues 235–237 and Ser-237 each bind ATP; that span reads HIS. 3 residues coordinate L-glutamate: Arg-283, Glu-289, and Arg-301. Positions 301 and 306 each coordinate ATP. Glu-318 provides a ligand contact to Mg(2+). Arg-320 is an L-glutamate binding site.

Belongs to the glutamine synthetase family. As to quaternary structure, oligomer of 12 subunits arranged in the form of two hexagons. Requires Mg(2+) as cofactor.

The protein localises to the cytoplasm. The enzyme catalyses L-glutamate + NH4(+) + ATP = L-glutamine + ADP + phosphate + H(+). Functionally, probably involved in nitrogen metabolism via ammonium assimilation. Catalyzes the ATP-dependent biosynthesis of glutamine from glutamate and ammonia. This is Glutamine synthetase from Pyrococcus abyssi (strain GE5 / Orsay).